We begin with the raw amino-acid sequence, 132 residues long: Interleukin-5 (132 aa).

Residues Met-1 to Ala-19 form the signal peptide. N-linked (GlcNAc...) asparagine glycosylation is found at Asn-74 and Asn-88.

Belongs to the IL-5 family. Homodimer; disulfide-linked. Interacts with IL5RA. Interacts with CSF2RB.

The protein resides in the secreted. In terms of biological role, homodimeric cytokine expressed predominantly by T-lymphocytes and NK cells that plays an important role in the survival, differentiation, and chemotaxis of eosinophils. Also acts on activated and resting B-cells to induce immunoglobulin production, growth, and differentiation. Mechanistically, exerts its biological effects through a receptor composed of IL5RA subunit and the cytokine receptor common subunit beta/CSF2RB. Binding to the receptor leads to activation of various kinases including LYN, SYK and JAK2 and thereby propagates signals through the RAS-MAPK and JAK-STAT5 pathways respectively. This Ovis aries (Sheep) protein is Interleukin-5 (IL5).